The sequence spans 208 residues: V-type ATP synthase subunit D (208 aa).

It belongs to the V-ATPase D subunit family.

In terms of biological role, produces ATP from ADP in the presence of a proton gradient across the membrane. In Streptococcus pyogenes serotype M1, this protein is V-type ATP synthase subunit D.